A 544-amino-acid chain; its full sequence is NXPE family member 4 (544 aa).

The first 27 residues, 1-27, serve as a signal peptide directing secretion; the sequence is MKISMINYKSLLALLFILASWIIFTVF. N-linked (GlcNAc...) asparagine glycosylation is found at Asn-29, Asn-38, Asn-47, Asn-48, Asn-92, Asn-160, and Asn-210.

It belongs to the NXPE family.

It is found in the secreted. This is NXPE family member 4 (NXPE4) from Homo sapiens (Human).